The following is a 222-amino-acid chain: Small ribosomal subunit protein uS3 (222 aa).

A KH type-2 domain is found at 39–108 (IRRHIKEKLY…TISLDIKEIK (70 aa)).

The protein belongs to the universal ribosomal protein uS3 family. Part of the 30S ribosomal subunit. Forms a tight complex with proteins S10 and S14.

Binds the lower part of the 30S subunit head. Binds mRNA in the 70S ribosome, positioning it for translation. This chain is Small ribosomal subunit protein uS3, found in Caldicellulosiruptor bescii (strain ATCC BAA-1888 / DSM 6725 / KCTC 15123 / Z-1320) (Anaerocellum thermophilum).